We begin with the raw amino-acid sequence, 708 residues long: MPRFAIIFALLIAYSLFLSTLFTGSIPDRANTVTSNAPCQVVIWDWIRTRRICNCCSRLCYSLLGRSNLSRTAKRGVCTIAGAVLATAAVIVAAVLVGKSSGSATKRGLTKTISVLNHTIPFTDHILNGQTLSNGTGSNFVTIGFSGYAVHATIKRASTTDIISWVIPESMEPTLARVASYVSSSSINLAAVPDTGGNASALSFQNAVQEFATSWVSMTYDQSYGDLRNVANDEGGEEILILMRKRSYRISFQVIETGSTALLLRTRRVVSQLITMTYLVTVQARVGIQIGDIFQHYGGIDNYVMTSISVLRTLEDKAFHENKLLIVREPPNKSNQDANQSYRLRPFSANDLIQNLKSVDIGFLAFCSFFDKYAHYPEIIMMKITIFISKGNLWSIIYVIQARYVRKRVMKVRGQMPGGLLTNMESLLNIVSTPNLNISEFHIQTHSMSQSKPMYFQKQCYSSQNNIIYIYNSIHITCGAVYVIVHDVRTPSVFVLIELRNCKPLKNSWCETTKTSPRDTKIKKNEYNETVCRRAGALLDGRVRTIRFLMMRTHWSRVKGVSCNTANRLSRFCNHVVSYYPSQNATIHLLPTSLRAESLEQQYTTRPLSSSNNRFCCLKSIFINNCKKACESPSLVSCNLQQTAELLMVYYLYICEACYVSRNHDLLSKQCMSTVRAVYVARMRLPKFRSTFPCMPRLCWLVNGVVVV.

The first 27 residues, 1-27, serve as a signal peptide directing secretion; sequence MPRFAIIFALLIAYSLFLSTLFTGSIP. A propeptide spanning residues 28-36 is cleaved from the precursor; that stretch reads DRANTVTSN. A run of 3 helical transmembrane segments spans residues 77–97, 380–400, and 466–486; these read VCTI…AVLV, IMMK…IYVI, and NIIY…VIVH.

It to yeast YER187w. In terms of assembly, monomer.

The protein resides in the cell membrane. Functionally, kills sensitive strains of yeast. In Saccharomyces cerevisiae (Baker's yeast), this protein is Killer toxin KHS (KHS1).